The primary structure comprises 315 residues: 4-diphosphocytidyl-2-C-methyl-D-erythritol kinase (315 aa).

Lys-11 is an active-site residue. Pro-99 to Ala-109 serves as a coordination point for ATP. Residue Asp-141 is part of the active site.

The protein belongs to the GHMP kinase family. IspE subfamily.

It catalyses the reaction 4-CDP-2-C-methyl-D-erythritol + ATP = 4-CDP-2-C-methyl-D-erythritol 2-phosphate + ADP + H(+). It participates in isoprenoid biosynthesis; isopentenyl diphosphate biosynthesis via DXP pathway; isopentenyl diphosphate from 1-deoxy-D-xylulose 5-phosphate: step 3/6. Its function is as follows. Catalyzes the phosphorylation of the position 2 hydroxy group of 4-diphosphocytidyl-2C-methyl-D-erythritol. In Synechocystis sp. (strain ATCC 27184 / PCC 6803 / Kazusa), this protein is 4-diphosphocytidyl-2-C-methyl-D-erythritol kinase.